The chain runs to 393 residues: Autophagy-related protein 18c (393 aa).

WD repeat units follow at residues 27–65 (KEEA…ETFR), 70–114 (DGGF…CISE), 199–239 (AHDS…RLQE), and 244–283 (VDRA…VGED).

It belongs to the WD repeat PROPPIN family. As to quaternary structure, component of the PI(3,5)P2 regulatory complex at least composed of ATG18, SAC/FIG4, FAB1 and VAC14. Expressed in roots, stems, flowers and leaves.

Its subcellular location is the preautophagosomal structure membrane. The protein localises to the vacuole membrane. Functionally, the PI(3,5)P2 regulatory complex regulates both the synthesis and turnover of phosphatidylinositol 3,5-bisphosphate (PtdIns(3,5)P2). Required for autophagy. This is Autophagy-related protein 18c (ATG18C) from Arabidopsis thaliana (Mouse-ear cress).